The chain runs to 359 residues: MTLESMMACCLSDEVKESKRINAEIEKQLRRDKRDARRELKLLLLGTGESGKSTFIKQMRIIHGAGYSEEDKRGFTKLVYQNIFTAMQAMVRAMETLKILYKYEQNKANALLIREVDVEKVTTFEHQYVNAIKTLWSDPGVQECYDRRREFQLSDSAKYYLTDVDRIATVGYLPTQQDVLRVRVPTTGIIEYPFDLENIIFRMVDVGGQRSERRKWIHCFENVTSIMFLVALSEYDQVLVESDNENRMEESKALFRTIITYPWFQNSSVILFLNKKDLLEDKILHSHLVDYFPEFDGPQRDAQAAREFILKMFVDLNPDSDKIIYSHFTCATDTENIRFVFAAVKDTILQLNLKEYNLV.

Residues Cys9 and Cys10 are each lipidated (S-palmitoyl cysteine). The 322-residue stretch at 38–359 folds into the G-alpha domain; the sequence is RELKLLLLGT…QLNLKEYNLV (322 aa). Residues 41-54 form a G1 motif region; sequence KLLLLGTGESGKST. Residues 46 to 53 and 180 to 183 contribute to the GTP site; these read GTGESGKS and LRVR. Residue Ser53 participates in Mg(2+) binding. The interval 178 to 186 is G2 motif; that stretch reads DVLRVRVPT. Thr186 contributes to the Mg(2+) binding site. The tract at residues 201-210 is G3 motif; that stretch reads FRMVDVGGQR. The segment at 270–277 is G4 motif; sequence ILFLNKKD. GTP-binding positions include 274-277 and Ala331; that span reads NKKD. Residues 329–334 form a G5 motif region; that stretch reads TCATDT.

Belongs to the G-alpha family. G(q) subfamily. G proteins are composed of 3 units; alpha, beta and gamma. The alpha chain contains the guanine nucleotide binding site. Interacts with RGS22. Interacts with NTSR1.

The protein resides in the cell membrane. It localises to the cytoplasm. The enzyme catalyses GTP + H2O = GDP + phosphate + H(+). Guanine nucleotide-binding proteins (G proteins) function as transducers downstream of G protein-coupled receptors (GPCRs) in numerous signaling cascades. The alpha chain contains the guanine nucleotide binding site and alternates between an active, GTP-bound state and an inactive, GDP-bound state. Signaling by an activated GPCR promotes GDP release and GTP binding. The alpha subunit has a low GTPase activity that converts bound GTP to GDP, thereby terminating the signal. Both GDP release and GTP hydrolysis are modulated by numerous regulatory proteins. Signaling is mediated via phospholipase C-beta-dependent inositol lipid hydrolysis for signal propagation: activates phospholipase C-beta: following GPCR activation, GNA11 activates PLC-beta (PLCB1, PLCB2, PLCB3 or PLCB4), leading to production of diacylglycerol (DAG) and inositol 1,4,5-trisphosphate (IP3). Transduces FFAR4 signaling in response to long-chain fatty acids (LCFAs). Together with GNAQ, required for heart development. In the respiratory epithelium, transmits OXGR1-dependent signals that lead to downstream intracellular Ca(2+) release and mucocilliary clearance of airborne pathogens. The polypeptide is Guanine nucleotide-binding protein subunit alpha-11 (Gna11) (Mus musculus (Mouse)).